A 725-amino-acid chain; its full sequence is Rab-like protein 6 (725 aa).

Methionine 1 bears the N-acetylmethionine mark. The tract at residues 39–279 is small GTPase-like; it reads GVQYNMKIVI…IFLEMMEARS (241 aa). Residues 50–57, 100–104, and 177–179 contribute to the GTP site; these read GDRNTGKT, DVVDK, and YRD. Disordered stretches follow at residues 281–364 and 378–725; these read GHAS…PAPA and PAAE…YEEL. 2 stretches are compositionally biased toward low complexity: residues 291–325 and 343–353; these read QSPSSGSQSPVVPPSAVSTGSSSPSTPQPAPQLSL and AMPSSVHSSAP. Basic and acidic residues predominate over residues 410–427; it reads GLDRSFLEDTSVPKDKKV. A phosphoserine mark is found at serine 414, serine 436, serine 438, serine 480, serine 482, serine 483, and serine 502. Residues 499-514 are compositionally biased toward polar residues; the sequence is QQCSEPETKWSSTKVS. Positions 537–549 are enriched in basic and acidic residues; it reads DSERPQEGKDKQV. The span at 569–578 shows a compositional bias: acidic residues; that stretch reads DDPDFESDES. Residues serine 575 and serine 594 each carry the phosphoserine modification. Threonine 597 is subject to Phosphothreonine. Residues 632–649 are compositionally biased toward basic and acidic residues; the sequence is MGPKESSDEDRDSKLPSK. Phosphoserine is present on residues serine 637, serine 638, and serine 644. An interaction with CDKN2A region spans residues 652 to 690; sequence KKKKKKSKEEEEKTTKKKSKHKKSKDKEEGKEDRKKKRK. A compositionally biased stretch (basic residues) spans 666–675; the sequence is TKKKSKHKKS. Gly residues predominate over residues 707 to 725; sequence LGGGAPGSRHPGGGDYEEL.

This sequence belongs to the small GTPase superfamily. Rab family.

The protein localises to the nucleus. The protein resides in the cytoplasm. Functionally, may enhance cellular proliferation. May reduce growth inhibitory activity of CDKN2A. The protein is Rab-like protein 6 (Rabl6) of Mus musculus (Mouse).